Consider the following 1014-residue polypeptide: Poly [ADP-ribose] polymerase 1 (1014 aa).

The residue at position 2 (A2) is an N-acetylalanine. Residues 9 to 93 form a PARP-type 1 zinc finger; the sequence is YRVEYAKSGR…KVKKTAEAGG (85 aa). Residues C21 and C24 each coordinate Zn(2+). Phosphoserine is present on S41. H53 and C56 together coordinate Zn(2+). N6-acetyllysine occurs at positions 97 and 105. The PARP-type 2 zinc-finger motif lies at 113 to 203; sequence FAAEYAKSNR…ALKKQLPGVK (91 aa). Positions 125 and 128 each coordinate Zn(2+). At K131 the chain carries N6-acetyllysine. Residues H159 and C162 each contribute to the Zn(2+) site. Phosphoserine is present on residues S177, S179, and S185. K192 participates in a covalent cross-link: Glycyl lysine isopeptide (Lys-Gly) (interchain with G-Cter in SUMO2). Positions 198-233 are disordered; the sequence is QLPGVKSEGKRKGDEVDGVDEVAKKKSKKEKDKDSK. K203 participates in a covalent cross-link: Glycyl lysine isopeptide (Lys-Gly) (interchain with G-Cter in SUMO1); alternate. Residue K203 forms a Glycyl lysine isopeptide (Lys-Gly) (interchain with G-Cter in SUMO2); alternate linkage. Basic and acidic residues predominate over residues 204–233; that stretch reads SEGKRKGDEVDGVDEVAKKKSKKEKDKDSK. 2 consecutive short sequence motifs (nuclear localization signal) follow at residues 207–209 and 221–226; these read KRK and KKKSKK. Residues 225 to 359 enclose the PADR1 zinc-binding domain; the sequence is KKEKDKDSKL…VKKQDRIFPP (135 aa). K249 participates in a covalent cross-link: Glycyl lysine isopeptide (Lys-Gly) (interchain with G-Cter in SUMO2). S274 and S277 each carry phosphoserine. The segment at 290–332 is zinc ribbon; that stretch reads GALLPCEECSGQLVFKSDAYYCTGDVTAWTKCMVKTQTPNRKE. C295, C298, C311, and C321 together coordinate Zn(2+). The tract at residues 361 to 385 is disordered; sequence TSASVAATPPPSTASAPAAVNSSAS. A Phosphoserine modification is found at S364. T368 is modified (phosphothreonine). The segment at 373 to 524 is automodification domain; it reads TASAPAAVNS…GINKSEKRMK (152 aa). One can recognise a BRCT domain in the interval 385-476; that stretch reads SADKPLSNMK…KSLQELFLAH (92 aa). D387 carries the post-translational modification PolyADP-ribosyl aspartic acid. PolyADP-ribosyl glutamic acid occurs at positions 407, 413, 435, 437, 444, 445, 448, and 456. A Glycyl lysine isopeptide (Lys-Gly) (interchain with G-Cter in SUMO2) cross-link involves residue K467. A polyADP-ribosyl glutamic acid mark is found at E471 and E484. A Glycyl lysine isopeptide (Lys-Gly) (interchain with G-Cter in SUMO1); alternate cross-link involves residue K486. K486 participates in a covalent cross-link: Glycyl lysine isopeptide (Lys-Gly) (interchain with G-Cter in SUMO2); alternate. PolyADP-ribosyl glutamic acid occurs at positions 488 and 491. ADP-ribosylserine occurs at positions 499, 504, and 507. Residue K512 forms a Glycyl lysine isopeptide (Lys-Gly) (interchain with G-Cter in SUMO2) linkage. PolyADP-ribosyl glutamic acid occurs at positions 513 and 514. At S519 the chain carries ADP-ribosylserine. Residue E520 is modified to PolyADP-ribosyl glutamic acid. An N6-(ADP-ribosyl)lysine modification is found at K521. K528 participates in a covalent cross-link: Glycyl lysine isopeptide (Lys-Gly) (interchain with G-Cter in SUMO2). The WGR domain maps to 542–638; it reads SAHVLEKGGK…KNFTKYPKKF (97 aa). The residue at position 594 (T594) is a Phosphothreonine; by PRKDC. An N6-acetyllysine mark is found at K600 and K621. The PARP alpha-helical domain maps to 662 to 779; it reads KSKLPKPVQD…DIEVAYSLLR (118 aa). Residue K748 forms a Glycyl lysine isopeptide (Lys-Gly) (interchain with G-Cter in SUMO1); alternate linkage. K748 is covalently cross-linked (Glycyl lysine isopeptide (Lys-Gly) (interchain with G-Cter in SUMO2); alternate). Phosphoserine occurs at positions 782 and 786. In terms of domain architecture, PARP catalytic spans 788–1014; sequence DPIDVNYEKL…LKFNFKTSLW (227 aa). NAD(+) is bound by residues 862–864, G871, R878, and S904; that span reads HGS. Catalysis depends on E988, which acts as the For poly [ADP-ribose] polymerase activity.

The protein belongs to the ARTD/PARP family. In terms of assembly, homodimer; PARP-type zinc-fingers from separate PARP1 molecules form a dimer module that specifically recognizes DNA strand breaks. Heterodimer; heterodimerizes with PARP2. Interacts (via the PARP catalytic domain) with HPF1. Interacts with NMNAT1. Interacts with nucleosomes; with a preference for nucleosomes containing H2A.X. Interacts with APTX. Component of a base excision repair (BER) complex, containing at least XRCC1, PARP1, PARP2, POLB and LRIG3. Interacts with SRY. The SWAP complex consists of NPM1, NCL, PARP1 and SWAP70. Interacts with TIAM2. Interacts with PARP3; leading to activate PARP1 in absence of DNA. Interacts (when poly-ADP-ribosylated) with CHD1L (via macro domain). Interacts with the DNA polymerase alpha catalytic subunit POLA1; this interaction functions as part of the control of replication fork progression. Interacts with EEF1A1 and TXK. Interacts with RNF4. Interacts with RNF146. Interacts with ZNF423. Interacts with APLF. Interacts with SNAI1 (via zinc fingers); the interaction requires SNAI1 to be poly-ADP-ribosylated and non-phosphorylated (active) by GSK3B. Interacts (when poly-ADP-ribosylated) with PARP9. Interacts with NR4A3; activates PARP1 by improving acetylation of PARP1 and suppressing the interaction between PARP1 and SIRT1. Interacts (via catalytic domain) with PUM3; the interaction inhibits the poly-ADP-ribosylation activity of PARP1 and the degradation of PARP1 by CASP3 following genotoxic stress. Interacts with ZNF365. Interacts with RRP1B. Interacts with TIMELESS; the interaction is direct. Interacts with CGAS; leading to impede the formation of the PARP1-TIMELESS complex. Interacts with KHDC3L, the interaction is increased following the formation of DNA double-strand breaks. Interacts (when auto-poly-ADP-ribosylated) with XRCC1; leading to inhibit PARP1 ADP-ribosyltransferase activity. Interacts with SPINDOC; promoting PARP1 ADP-ribosyltransferase activity. Interacts with BANF1; leading to inhibit PARP1 ADP-ribosyltransferase activity in response to oxidative DNA damage. Interacts (when sumoylated and ubiquitinated) with VCP/p97; leading to its extraction from chromatin. Interacts with YARS1; Interacts with PACMP micropeptide; interaction. Interacts with PACMP micropeptide; Interacts with PACMP micropeptide; interaction. Interacts (when poly-ADP-ribosylated) with isoform 1 of MACROH2A1; MACROH2A1 specifically binds to poly-ADP-ribose chains and inhibits PARP1 activity, limiting the consumption of nuclear NAD(+). Interacts with CARM1; promoting recruitment to replication forks. Interacts with RECQL. Interacts with ZNF32; the interaction reshapes ZNF432 interacting proteins. Interacts with TPRN; TPRN interacts with a number of DNA damage response proteins, is recruited to sites of DNA damage and may play a role in DNA damage repair. Interacts (when auto-poly-ADP-ribosylated) with AIFM1. As to quaternary structure, (Microbial infection) Interacts with human herpesvirus 8 (KSHV) protein RTA/ORF50; this interaction negatively regulates RTA/ORF50 transactivation activity. In terms of processing, poly-ADP-ribosylated on serine, glutamate and aspartate residues by autocatalysis. Auto-ADP-ribosylation on serine takes place following interaction with HPF1. Auto poly-ADP-ribosylation on serine residues promotes its dissociation from chromatin. Poly-ADP-ribosylated by PARP2; poly-ADP-ribosylation mediates the recruitment of CHD1L to DNA damage sites. Mono-ADP-ribosylated at Lys-521 by SIRT6 in response to oxidative stress, promoting recruitment to double-strand breaks (DSBs) sites. Phosphorylated at Thr-594 by PRKDC in response to DNA damage following virus infection, promoting its translocation to the cytosol. Phosphorylated by TXK. Post-translationally, S-nitrosylated, leading to inhibit transcription regulation activity. In terms of processing, proteolytically cleaved by caspase-3 (CASP3) and caspase-7 (CASP7) in response to apoptosis to generate the Poly [ADP-ribose] polymerase 1, processed N-terminus and Poly [ADP-ribose] polymerase 1, processed C-terminus forms. CASP3-mediated cleavage is promoted by the TP53/p53-induced long non-coding RNA SPARCLE, which binds PARP1 in response to genotoxic stress. Sumoylated with SUMO1 or SUMO2 by PIAS4 following prolonged residence (trapping) to chromatin. Sumoylation promotes ubiquitination by RNF4 and removal from chromatin by VCP/p97. Post-translationally, ubiquitinated by RNF4 following sumoylation by PIAS4 in response to prolonged residence (trapping) to chromatin. Ubiquitination promotes removal from chromatin by VCP/p97.

It localises to the chromosome. It is found in the nucleus. Its subcellular location is the nucleolus. The protein resides in the cytoplasm. The protein localises to the cytosol. The catalysed reaction is NAD(+) + (ADP-D-ribosyl)n-acceptor = nicotinamide + (ADP-D-ribosyl)n+1-acceptor + H(+).. It catalyses the reaction L-seryl-[protein] + NAD(+) = O-(ADP-D-ribosyl)-L-seryl-[protein] + nicotinamide + H(+). The enzyme catalyses L-aspartyl-[protein] + NAD(+) = 4-O-(ADP-D-ribosyl)-L-aspartyl-[protein] + nicotinamide. It carries out the reaction L-glutamyl-[protein] + NAD(+) = 5-O-(ADP-D-ribosyl)-L-glutamyl-[protein] + nicotinamide. The catalysed reaction is L-tyrosyl-[protein] + NAD(+) = O-(ADP-D-ribosyl)-L-tyrosyl-[protein] + nicotinamide + H(+). It catalyses the reaction L-histidyl-[protein] + NAD(+) = N(tele)-(ADP-D-ribosyl)-L-histidyl-[protein] + nicotinamide + H(+). Its activity is regulated as follows. ADP-ribosyltransferase activity is regulated via an allosteric activation mechanism. In absence of activation signal, PARP1 is autoinhibited by the PARP alpha-helical domain (also named HD region), which prevents effective NAD(+)-binding. Activity is highly stimulated by signals, such as DNA strand breaks. Binding to damaged DNA unfolds the PARP alpha-helical domain, relieving autoinhibition. Poly-ADP-ribosyltransferase activity is tightly regulated and PARP1 is removed from damaged chromatin following initial poly-ADP-ribosylation of chromatin to avoid prolonged residence (trapping) that has cytotoxic consequences. A number of factors (VCP/p97) or post-translational modifications (auto-poly-ADP-ribosylation or ubiquitination) promote PARP1 removal from chromatin. ADP-ribosyltransferase activity is inhibited by a number of PARP inhibitors (PARPi) compounds, that are used the treatment of breast or ovarian cancers that have defects in DNA repair by homologous recombination. PARPi molecules can be classified in three categories: type I compounds (EB-47, UKTT15 and BAD) that promote allosteric retention of PARP1 on DNA, type II inhibitors (talazoparib and olaparib) that mediate a non-allosteric inhibition, and type III inhibitors (rucaparib, niraparib, and veliparib) that promote allosteric release from DNA. Trapping to chromatin by PARPi molecules triggers activation of the cGAS-STING pathway. Functionally, poly-ADP-ribosyltransferase that mediates poly-ADP-ribosylation of proteins and plays a key role in DNA repair. Mediates glutamate, aspartate, serine, histidine or tyrosine ADP-ribosylation of proteins: the ADP-D-ribosyl group of NAD(+) is transferred to the acceptor carboxyl group of target residues and further ADP-ribosyl groups are transferred to the 2'-position of the terminal adenosine moiety, building up a polymer with an average chain length of 20-30 units. Serine ADP-ribosylation of proteins constitutes the primary form of ADP-ribosylation of proteins in response to DNA damage. Specificity for the different amino acids is conferred by interacting factors, such as HPF1 and NMNAT1. Following interaction with HPF1, catalyzes serine ADP-ribosylation of target proteins; HPF1 confers serine specificity by completing the PARP1 active site. Also catalyzes tyrosine ADP-ribosylation of target proteins following interaction with HPF1. Following interaction with NMNAT1, catalyzes glutamate and aspartate ADP-ribosylation of target proteins; NMNAT1 confers glutamate and aspartate specificity. PARP1 initiates the repair of DNA breaks: recognizes and binds DNA breaks within chromatin and recruits HPF1, licensing serine ADP-ribosylation of target proteins, such as histones (H2BS6ADPr and H3S10ADPr), thereby promoting decompaction of chromatin and the recruitment of repair factors leading to the reparation of DNA strand breaks. HPF1 initiates serine ADP-ribosylation but restricts the polymerase activity of PARP1 in order to limit the length of poly-ADP-ribose chains. In addition to base excision repair (BER) pathway, also involved in double-strand breaks (DSBs) repair: together with TIMELESS, accumulates at DNA damage sites and promotes homologous recombination repair by mediating poly-ADP-ribosylation. Mediates the poly-ADP-ribosylation of a number of proteins, including itself, APLF, CHFR, RPA1 and NFAT5. In addition to proteins, also able to ADP-ribosylate DNA: catalyzes ADP-ribosylation of DNA strand break termini containing terminal phosphates and a 2'-OH group in single- and double-stranded DNA, respectively. Required for PARP9 and DTX3L recruitment to DNA damage sites. PARP1-dependent PARP9-DTX3L-mediated ubiquitination promotes the rapid and specific recruitment of 53BP1/TP53BP1, UIMC1/RAP80, and BRCA1 to DNA damage sites. PARP1-mediated DNA repair in neurons plays a role in sleep: senses DNA damage in neurons and promotes sleep, facilitating efficient DNA repair. In addition to DNA repair, also involved in other processes, such as transcription regulation, programmed cell death, membrane repair, adipogenesis and innate immunity. Acts as a repressor of transcription: binds to nucleosomes and modulates chromatin structure in a manner similar to histone H1, thereby altering RNA polymerase II. Acts both as a positive and negative regulator of transcription elongation, depending on the context. Acts as a positive regulator of transcription elongation by mediating poly-ADP-ribosylation of NELFE, preventing RNA-binding activity of NELFE and relieving transcription pausing. Acts as a negative regulator of transcription elongation in response to DNA damage by catalyzing poly-ADP-ribosylation of CCNT1, disrupting the phase separation activity of CCNT1 and subsequent activation of CDK9. Involved in replication fork progression following interaction with CARM1: mediates poly-ADP-ribosylation at replication forks, slowing fork progression. Poly-ADP-ribose chains generated by PARP1 also play a role in poly-ADP-ribose-dependent cell death, a process named parthanatos. Also acts as a negative regulator of the cGAS-STING pathway. Acts by mediating poly-ADP-ribosylation of CGAS: PARP1 translocates into the cytosol following phosphorylation by PRKDC and catalyzes poly-ADP-ribosylation and inactivation of CGAS. Acts as a negative regulator of adipogenesis: catalyzes poly-ADP-ribosylation of histone H2B on 'Glu-35' (H2BE35ADPr) following interaction with NMNAT1, inhibiting phosphorylation of H2B at 'Ser-36' (H2BS36ph), thereby blocking expression of pro-adipogenetic genes. Involved in the synthesis of ATP in the nucleus, together with NMNAT1, PARG and NUDT5. Nuclear ATP generation is required for extensive chromatin remodeling events that are energy-consuming. In terms of biological role, promotes AIFM1-mediated apoptosis. This form, which translocates into the cytoplasm following cleavage by caspase-3 (CASP3) and caspase-7 (CASP7) in response to apoptosis, is auto-poly-ADP-ribosylated and serves as a poly-ADP-ribose carrier to induce AIFM1-mediated apoptosis. This cleavage form irreversibly binds to DNA breaks and interferes with DNA repair, promoting DNA damage-induced apoptosis. The sequence is that of Poly [ADP-ribose] polymerase 1 from Homo sapiens (Human).